Consider the following 1040-residue polypeptide: Multidrug resistance protein MdtB (1040 aa).

11 consecutive transmembrane segments (helical) span residues 15–37 (LFILRPVATTLLMAAILLAGIIG), 345–362 (FELMLAIALVVMIIYLFL), 367–389 (ATIIPGVAVPLSLIGTFAVMVFL), 396–418 (LTLMALTIATGFVVDDAIVVIEN), 438–460 (GEIGFTIISLTFSLIAVLIPLLF), 472–494 (FAVTLAVAILISAVVSLTLTPMM), 535–557 (HPWLTLSVAFATLLLSVMLWIVI), 867–889 (VWLIVAAVVAMYIVLGVLYESFI), 909–931 (LIIAGSELDIIAIIGIILLIGIV), 968–990 (ILMTTLAALLGALPLMLSTGVGT), and 1000–1022 (MVGGLLVSQVLTLFTTPVIYLLF).

It belongs to the resistance-nodulation-cell division (RND) (TC 2.A.6) family. MdtB subfamily. As to quaternary structure, part of a tripartite efflux system composed of MdtA, MdtB and MdtC. MdtB forms a heteromultimer with MdtC.

The protein resides in the cell inner membrane. This is Multidrug resistance protein MdtB from Salmonella typhimurium (strain LT2 / SGSC1412 / ATCC 700720).